Consider the following 327-residue polypeptide: Serpentine receptor class alpha-12 (327 aa).

The Extracellular portion of the chain corresponds to 1–18 (MGCASEIQAEIFTSFGQL). Residues 19 to 39 (FYASFQTILFLATIIGSLLAI) form a helical membrane-spanning segment. Over 40 to 53 (FELCKKTTVPDSTR) the chain is Cytoplasmic. Residues 54 to 74 (VLLIGSLFFANAHEFAYFTAP) traverse the membrane as a helical segment. Topologically, residues 75-98 (LKVFQLNIFNTNTSCYPLISTRDC) are extracellular. The helical transmembrane segment at 99-119 (IPTTTVLAMGISGNMLIQSAL) threads the bilayer. The Cytoplasmic segment spans residues 120–138 (SIDRLLATIFPFSYSRMRA). The chain crosses the membrane as a helical span at residues 139–159 (LPGFVLLIMVLIPAMFTYSWI). Residues 160–185 (RLDIVLDDYQMFCSQWSANISTRANT) lie on the Extracellular side of the membrane. A helical transmembrane segment spans residues 186-206 (FLEICSYLTVAHIIINCLIIL). At 207–234 (RNRAIEKRCRFDVTQRYLTSENLKTTQA) the chain is on the cytoplasmic side. Residues 235–255 (ICYLSIAQFLAMFMYSGGVLL) form a helical membrane-spanning segment. Over 256 to 270 (MRKNRENIPTLIYFN) the chain is Extracellular. Residues 271–291 (VIVWVYAPPYACVSLAPLILF) traverse the membrane as a helical segment. The Cytoplasmic portion of the chain corresponds to 292-327 (SLWNLKKQRHIQIKSVQSAQKETQDDYIRKLQKSWK).

The protein belongs to the nematode receptor-like protein sra family. Expressed in neurons RIF/RIG and PVT.

The protein localises to the membrane. The protein is Serpentine receptor class alpha-12 (sra-12) of Caenorhabditis elegans.